We begin with the raw amino-acid sequence, 704 residues long: Boron transporter 1 (704 aa).

The Cytoplasmic segment spans residues 1-35 (MEETFVPFEGIKNDLKGRLMCYKQDWTGGFKAGFR). A helical transmembrane segment spans residues 36–56 (ILAPTTYIFFASAIPVISFGE). Topologically, residues 57-75 (QLERSTDGVLTAVQTLAST) are extracellular. The helical transmembrane segment at 76–96 (AICGMIHSIIGGQPLLILGVA) threads the bilayer. The Cytoplasmic portion of the chain corresponds to 97–120 (EPTVIMYTFMFNFAKARPELGRDL). A helical transmembrane segment spans residues 121–141 (FLAWSGWVCVWTALMLFVLAI). Residues 142 to 155 (CGACSIINRFTRVA) are Extracellular-facing. Residues 156–176 (GELFGLLIAMLFMQQAIKGLV) form a helical membrane-spanning segment. At 177-195 (DEFRIPERENQKLKEFLPS) the chain is on the cytoplasmic side. A helical transmembrane segment spans residues 196-216 (WRFANGMFALVLSFGLLLTGL). The Extracellular portion of the chain corresponds to 217–233 (RSRKARSWRYGTGWLRS). A helical membrane pass occupies residues 234–254 (LIADYGVPLMVLVWTGVSYIP). At 255 to 289 (AGDVPKGIPRRLFSPNPWSPGAYGNWTVVKEMLDV) the chain is on the cytoplasmic side. The chain crosses the membrane as a helical span at residues 290-310 (PIVYIIGAFIPASMIAVLYYF). At 311–337 (DHSVASQLAQQKEFNLRKPSSYHYDLL) the chain is on the extracellular side. Residues 338–358 (LLGFLTLMCGLLGVPPSNGVI) traverse the membrane as a helical segment. Residues 359 to 480 (PQSPMHTKSL…STMVGGCVAA (122 aa)) lie on the Cytoplasmic side of the membrane. Residues 481-501 (MPILKMIPTSVLWGYFAFMAI) traverse the membrane as a helical segment. Residues 502-557 (ESLPGNQFWERILLLFTAPSRRFKVLEDYHATFVETVPFKTIAMFTLFQTTYLLIC) lie on the Extracellular side of the membrane. The helical transmembrane segment at 558 to 578 (FGLTWIPIAGVMFPLMIMFLI) threads the bilayer. Residues 579-704 (PVRQYLLPRF…RSPLNQSSSN (126 aa)) are Cytoplasmic-facing. A disordered region spans residues 641 to 704 (EFRHTSSPKV…RSPLNQSSSN (64 aa)). Residues 647–664 (SPKVTSSSSTPVNNRSLS) show a composition bias toward low complexity.

This sequence belongs to the anion exchanger (TC 2.A.31.3) family. In terms of tissue distribution, expressed in proximal side of various root cells, notably in the columella, lateral root cap, epidermis and endodermis in tip and elongation zones of the root. Also detected in the epidermis, cortex, endodermis, and stele cells of the root hair zone. Observed in cotyledons and hypocotyls.

It is found in the cell membrane. The protein resides in the endosome membrane. The protein localises to the vacuole membrane. In terms of biological role, efflux-type boron (B) transporter for xylem loading, responsive of boron translocation from roots to shoots under boron limitation. Boron is essential for maintaining the integrity of plants cell walls. The chain is Boron transporter 1 from Arabidopsis thaliana (Mouse-ear cress).